The primary structure comprises 308 residues: Oxygen-dependent coproporphyrinogen-III oxidase (308 aa).

Position 94 (Ser94) interacts with substrate. A divalent metal cation is bound by residues His98 and His108. His108 acts as the Proton donor in catalysis. Residue 110–112 (NVR) coordinates substrate. A divalent metal cation is bound by residues His147 and His177. The segment at 242–277 (YVEFNLVWDRGTLFGLQTGGRTESILMSMPPLVRWE) is important for dimerization. 260-262 (GGR) contributes to the substrate binding site.

This sequence belongs to the aerobic coproporphyrinogen-III oxidase family. In terms of assembly, homodimer. A divalent metal cation is required as a cofactor.

Its subcellular location is the cytoplasm. The catalysed reaction is coproporphyrinogen III + O2 + 2 H(+) = protoporphyrinogen IX + 2 CO2 + 2 H2O. It participates in porphyrin-containing compound metabolism; protoporphyrin-IX biosynthesis; protoporphyrinogen-IX from coproporphyrinogen-III (O2 route): step 1/1. Involved in the heme biosynthesis. Catalyzes the aerobic oxidative decarboxylation of propionate groups of rings A and B of coproporphyrinogen-III to yield the vinyl groups in protoporphyrinogen-IX. The protein is Oxygen-dependent coproporphyrinogen-III oxidase of Yersinia enterocolitica serotype O:8 / biotype 1B (strain NCTC 13174 / 8081).